Reading from the N-terminus, the 359-residue chain is Peptide chain release factor 1 (359 aa).

An N5-methylglutamine modification is found at Q236.

Belongs to the prokaryotic/mitochondrial release factor family. Methylated by PrmC. Methylation increases the termination efficiency of RF1.

It localises to the cytoplasm. Its function is as follows. Peptide chain release factor 1 directs the termination of translation in response to the peptide chain termination codons UAG and UAA. This is Peptide chain release factor 1 from Ureaplasma parvum serovar 3 (strain ATCC 27815 / 27 / NCTC 11736).